We begin with the raw amino-acid sequence, 89 residues long: Small ribosomal subunit protein bS20 (89 aa).

A disordered region spans residues 1–27; sequence MANIKSAKKDSIISEERRKKNASQRSK. Positions 7–18 are enriched in basic and acidic residues; the sequence is AKKDSIISEERR.

It belongs to the bacterial ribosomal protein bS20 family.

Its function is as follows. Binds directly to 16S ribosomal RNA. The protein is Small ribosomal subunit protein bS20 of Buchnera aphidicola subsp. Schizaphis graminum (strain Sg).